A 439-amino-acid chain; its full sequence is Tubulin beta chain (439 aa).

Residues Gln11, Glu69, Ser138, Gly142, Thr143, Gly144, Asn204, and Asn226 each contribute to the GTP site. Mg(2+) is bound at residue Glu69.

This sequence belongs to the tubulin family. As to quaternary structure, dimer of alpha and beta chains. A typical microtubule is a hollow water-filled tube with an outer diameter of 25 nm and an inner diameter of 15 nM. Alpha-beta heterodimers associate head-to-tail to form protofilaments running lengthwise along the microtubule wall with the beta-tubulin subunit facing the microtubule plus end conferring a structural polarity. Microtubules usually have 13 protofilaments but different protofilament numbers can be found in some organisms and specialized cells. Mg(2+) serves as cofactor.

It localises to the cytoplasm. The protein resides in the cytoskeleton. Functionally, tubulin is the major constituent of microtubules, a cylinder consisting of laterally associated linear protofilaments composed of alpha- and beta-tubulin heterodimers. Microtubules grow by the addition of GTP-tubulin dimers to the microtubule end, where a stabilizing cap forms. Below the cap, tubulin dimers are in GDP-bound state, owing to GTPase activity of alpha-tubulin. The sequence is that of Tubulin beta chain (TUB2) from Encephalitozoon intestinalis (Microsporidian parasite).